The sequence spans 79 residues: U1-plectoxin-Pt1c (79 aa).

Residues 1 to 18 form the signal peptide; sequence HLILASALICALVVCTFA. The propeptide occupies 19 to 31; sequence EEQVNVPFLPDER. 5 disulfides stabilise this stretch: Cys35–Cys49, Cys42–Cys55, Cys48–Cys66, Cys52–Cys75, and Cys57–Cys64. Residues 78 to 79 constitute a propeptide that is removed on maturation; the sequence is RR.

It belongs to the neurotoxin 02 (plectoxin) family. 02 (plectoxin) subfamily. In terms of tissue distribution, expressed by the venom gland.

The protein localises to the secreted. Potent toxin that may paralyze and/or kill insect pests such as H.virescens (lepidoptera), S.exigua (beet armyworm) and M.sexta (tobacco hornworm). The sequence is that of U1-plectoxin-Pt1c from Plectreurys tristis (Spider).